Reading from the N-terminus, the 497-residue chain is MPLRSLFHTNQSSHDKDALTRGGYNAYLESLSRCDSGKAEEQKGKVISKLLEKKDVRALRYIGLGPLGFVNNSLRKDCWYELLASQLLIDDATEYITPVEKHKDEGQVILDAERSFGGIVDKNLKLQLRKLLVELITRVLRKYPTLNYYQGYHDIVSVFIMCFSWNVTKENGLELENLSLQEEIDMERLFYCIEAFTLLYLRDFMMNSLDFSFEQLRVISSLIKESNMKFYNLFKFDENEPLFAIGSILTIFAHNLKPIDSGDNNLHKILFQIFDMTISMQSMRLPLIIYKNLLLQNASEISKQIEANSDFFENDFDLRHGAIQTVLQKKLYDEALWEEVLQITRKDATTASKKALKRVSLNKYSALLNTACGKPGCFDMSTIIFYLSEQTKMNEHYKEEKYHGVAARSKTRALVQRLGHFLPSKYNRWSKISLLIGIVAILYQLRTTRSLSLVLNLRYMISTKLKDLSHININLHHVSHIWVDPIRDILKLGHPTR.

Residues 69–281 form the Rab-GAP TBC domain; it reads FVNNSLRKDC…QIFDMTISMQ (213 aa).

The chain is GTPase-activating protein GYP8 (GYP8) from Saccharomyces cerevisiae (strain ATCC 204508 / S288c) (Baker's yeast).